The chain runs to 397 residues: NADH-quinone oxidoreductase subunit H 1 (397 aa).

10 helical membrane-spanning segments follow: residues 7-27 (FIFISLVKAAVIFGVLMTTLA), 84-104 (PFLAITMALLSISVIPFGPVI), 120-140 (IGVLFILAVSSMGVYGIALAG), 156-176 (SAQMISYELPMSLAIAAPLLI), 198-218 (LLSGPFPQVISFIIFIIAAFA), 258-278 (MITVSAMATLLFLGGWMAPWP), 279-299 (AAYGSSLVPSILFGISGLVLL), 313-333 (TFPAFGIIFLGIAGIFLLPMV), 337-357 (LLPLFWFCAKTGAILFAFMWI), and 376-396 (FLFPVAMLNLLVTGFLVAWTT).

The protein belongs to the complex I subunit 1 family. NDH-1 is composed of 14 different subunits. Subunits NuoA, H, J, K, L, M, N constitute the membrane sector of the complex.

Its subcellular location is the cell inner membrane. The catalysed reaction is a quinone + NADH + 5 H(+)(in) = a quinol + NAD(+) + 4 H(+)(out). Functionally, NDH-1 shuttles electrons from NADH, via FMN and iron-sulfur (Fe-S) centers, to quinones in the respiratory chain. The immediate electron acceptor for the enzyme in this species is believed to be ubiquinone. Couples the redox reaction to proton translocation (for every two electrons transferred, four hydrogen ions are translocated across the cytoplasmic membrane), and thus conserves the redox energy in a proton gradient. This subunit may bind ubiquinone. The chain is NADH-quinone oxidoreductase subunit H 1 from Solibacter usitatus (strain Ellin6076).